Reading from the N-terminus, the 843-residue chain is Transmembrane protease serine 7 (843 aa).

The Cytoplasmic portion of the chain corresponds to 1-76; the sequence is MDKENSDVSA…KVPFWNVQNK (76 aa). The interval 27 to 67 is disordered; the sequence is AQKKLPVRRPPLPGRRLPLPGRRPPQRPIGKAKPKKQSKKK. A compositionally biased stretch (basic residues) spans 56–67; sequence GKAKPKKQSKKK. A helical; Signal-anchor for type II membrane protein membrane pass occupies residues 77–97; it reads IILFTVFLFILAVIAWTLLWL. Residues 98–843 are Extracellular-facing; it reads YISKTESKDA…WIHKYVPSLL (746 aa). The SEA domain occupies 106–234; that stretch reads DAFYFAGMFR…DSVVLNAGLR (129 aa). Cystine bridges form between C247/C273, C299/C322, C365/C396, C484/C496, C491/C509, C503/C518, C525/C544, C538/C553, C559/C571, C566/C585, C579/C594, and C631/C647. 2 CUB domains span residues 247–360 and 365–481; these read CSQY…FEVI and CENT…YNIS. LDL-receptor class A domains are found at residues 483 to 519, 517 to 554, and 558 to 595; these read PCPV…LFCV, FCVS…QNCT, and PCNN…EGCT. Positions 606–840 constitute a Peptidase S1 domain; the sequence is IIGGTDTLEG…FVPWIHKYVP (235 aa). Catalysis depends on charge relay system residues H646 and D694. 2 cysteine pairs are disulfide-bonded: C730–C796 and C762–C775. Catalysis depends on S790, which acts as the Charge relay system.

It belongs to the peptidase S1 family. As to quaternary structure, forms a heterodimer with SERPINA5. Post-translationally, N-glycosylated. As to expression, expressed in brain, ovary, testis, salivary gland, trachea and lung.

It is found in the cell membrane. In terms of biological role, serine protease which preferentially hydrolyzes peptides with Arg at the P1 position. The protein is Transmembrane protease serine 7 (TMPRSS7) of Homo sapiens (Human).